We begin with the raw amino-acid sequence, 124 residues long: MNNILFVALGGSIGAVFRYLISIFMVQLFGSAFPFGTLLVNIIGSFLMGVIYALGQVSEVSPEIKALVGVGLLGALTTFSTFSNETLLLIQSGAWLKAFLNIALNLCLCIFMVYLGQQLVFSRI.

4 consecutive transmembrane segments (helical) span residues 4 to 24 (ILFVALGGSIGAVFRYLISIF), 35 to 55 (FGTLLVNIIGSFLMGVIYALG), 70 to 90 (VGLLGALTTFSTFSNETLLLI), and 95 to 115 (WLKAFLNIALNLCLCIFMVYL). 2 residues coordinate Na(+): glycine 74 and threonine 77.

The protein belongs to the fluoride channel Fluc/FEX (TC 1.A.43) family.

It localises to the cell inner membrane. It carries out the reaction fluoride(in) = fluoride(out). With respect to regulation, na(+) is not transported, but it plays an essential structural role and its presence is essential for fluoride channel function. Fluoride-specific ion channel. Important for reducing fluoride concentration in the cell, thus reducing its toxicity. In Shewanella woodyi (strain ATCC 51908 / MS32), this protein is Fluoride-specific ion channel FluC.